Here is a 360-residue protein sequence, read N- to C-terminus: uncharacterized protein (360 aa).

Residues 193 to 245 (SRHTRPKGQPLSSPKKNSGSAARPSTAIGLCRRSQTPGALQSTGPSNTELEPE) form a disordered region. Polar residues-rich tracts occupy residues 202–212 (PLSSPKKNSGS) and 225–241 (RSQT…SNTE).

This is an uncharacterized protein from Homo sapiens (Human).